Here is a 696-residue protein sequence, read N- to C-terminus: Junctophilin-2 (696 aa).

The Cytoplasmic segment spans residues 1-674; sequence MSGGRFDFDD…EVEVEEVPNT (674 aa). MORN repeat units follow at residues 14-36, 38-59, 60-79, 82-104, 106-128, and 129-151; these read YCGG…KGQG, YSGS…SGNT, FEGY…TKGR, YKGE…NSGA, YEGT…DGGT, and YQGQ…PYGM. 2 positions are modified to phosphoserine: serine 162 and serine 165. Disordered stretches follow at residues 164 to 192 and 246 to 273; these read SSLR…SPPV and LSSG…AAPF. 2 MORN repeats span residues 285–307 and 308–330; these read YMGE…SGLR and YEGE…DGHR. The Bipartite nuclear localization signal signature appears at 345–359; sequence KRRVLPLKSSKVRQK. The interval 439-664 is disordered; the sequence is NSESLLEPPE…RKEVAQAKEA (226 aa). Phosphoserine is present on residues serine 440, serine 442, and serine 462. Over residues 457-471 the composition is skewed to basic and acidic residues; that stretch reads ERPRESPQLHERETP. Phosphothreonine is present on threonine 470. Positions 474–487 are enriched in pro residues; the sequence is EGGPPSPAGTPPQP. Serine 479 is subject to Phosphoserine. Position 483 is a phosphothreonine (threonine 483). The Nuclear localization signal signature appears at 488–492; the sequence is KRPRP. Phosphoserine is present on residues serine 527 and serine 533. Positions 573 to 585 are enriched in acidic residues; the sequence is PLEDEQEPEPEPE. 3 positions are modified to phosphoserine: serine 593, serine 597, and serine 613. Over residues 631-644 the composition is skewed to basic and acidic residues; it reads AEPKAKARKTEARG. Residues 675-695 traverse the membrane as a helical; Anchor for type IV membrane protein segment; that stretch reads VLICMVILLNIGLAILFVHLL.

It belongs to the junctophilin family. In terms of assembly, interacts with TRPC3. Interacts with BAG5 and HSPA8; the interaction with HSPA8 is increased in the presence of BAG5. As to quaternary structure, interacts with MEF2C. Proteolytically cleaved by calpain in response to cardiac stress. The major cleavage site takes place at the C-terminus and leads to the release of the Junctophilin-2 N-terminal fragment chain (JP2NT). In terms of processing, phosphorylation on Ser-165, probably by PKC, affects RYR1-mediated calcium ion release, interaction with TRPC3, and skeletal muscle myotubule development. Abundantly expressed in skeletal muscle and heart. Weak expression in stomach and lung.

The protein resides in the cell membrane. The protein localises to the sarcoplasmic reticulum membrane. It localises to the endoplasmic reticulum membrane. It is found in the nucleus. Functionally, membrane-binding protein that provides a structural bridge between the plasma membrane and the sarcoplasmic reticulum and is required for normal excitation-contraction coupling in cardiomyocytes. Provides a structural foundation for functional cross-talk between the cell surface and intracellular Ca(2+) release channels by maintaining the 12-15 nm gap between the sarcolemma and the sarcoplasmic reticulum membranes in the cardiac dyads. Necessary for proper intracellular Ca(2+) signaling in cardiac myocytes via its involvement in ryanodine receptor-mediated calcium ion release. Contributes to the construction of skeletal muscle triad junctions. Transcription repressor required to safeguard against the deleterious effects of cardiac stress. Generated following cleavage of the Junctophilin-2 chain by calpain in response to cardiac stress in cardiomyocytes. Following cleavage and release from the membrane, translocates to the nucleus, binds DNA and represses expression of genes implicated in cell growth and differentiation, hypertrophy, inflammation and fibrosis. Modifies the transcription profile and thereby attenuates pathological remodeling in response to cardiac stress. Probably acts by competing with MEF2 transcription factors and TATA-binding proteins. The chain is Junctophilin-2 from Mus musculus (Mouse).